Reading from the N-terminus, the 519-residue chain is Mannuronan C5-epimerase (519 aa).

An N-terminal signal peptide occupies residues Met-1–Ala-25. PbH1 repeat units follow at residues Gly-219–Gln-246, Thr-281–Asp-303, Ser-305–Arg-328, Val-330–Arg-352, Ser-354–Glu-376, and Ser-377–Asn-399. His-302 (proton acceptor) is an active-site residue.

This sequence belongs to the D-mannuronate C5-epimerase family.

The protein localises to the periplasm. It catalyses the reaction [(1-&gt;4)-beta-D-mannuronosyl](n) = [alginate](n). It participates in glycan biosynthesis; alginate biosynthesis. Catalyzes the epimerization of beta-D-mannuronate to alpha-L-guluronate during the synthesis of the linear polysaccharide alginate. In addition, is part of a periplasmic protein complex that protects alginate from degradation by AlgL by channeling the newly formed alginate polymer through a scaffold that transfers the alginate polymer through the periplasmic space to the outer membrane secretin AlgE. This chain is Mannuronan C5-epimerase (algG), found in Pseudomonas putida (strain ATCC 47054 / DSM 6125 / CFBP 8728 / NCIMB 11950 / KT2440).